The primary structure comprises 46 residues: DNA-directed RNA polymerase subunit Rpo12 (46 aa).

Zn(2+) is bound by residues cysteine 8, cysteine 23, and cysteine 26.

Belongs to the archaeal Rpo12/eukaryotic RPC10 RNA polymerase subunit family. Part of the RNA polymerase complex. It depends on Zn(2+) as a cofactor.

Its subcellular location is the cytoplasm. It carries out the reaction RNA(n) + a ribonucleoside 5'-triphosphate = RNA(n+1) + diphosphate. Functionally, DNA-dependent RNA polymerase (RNAP) catalyzes the transcription of DNA into RNA using the four ribonucleoside triphosphates as substrates. The chain is DNA-directed RNA polymerase subunit Rpo12 from Archaeoglobus fulgidus (strain ATCC 49558 / DSM 4304 / JCM 9628 / NBRC 100126 / VC-16).